We begin with the raw amino-acid sequence, 643 residues long: tRNA 5-methylaminomethyl-2-thiouridine biosynthesis bifunctional protein MnmC (643 aa).

Residues 1–223 (MPDRLVSATL…VDDRLVGDYA (223 aa)) form a tRNA (mnm(5)s(2)U34)-methyltransferase region. The tract at residues 247–643 (IGAGLAGCAV…LRARRVGSAG (397 aa)) is FAD-dependent cmnm(5)s(2)U34 oxidoreductase.

The protein in the N-terminal section; belongs to the methyltransferase superfamily. tRNA (mnm(5)s(2)U34)-methyltransferase family. It in the C-terminal section; belongs to the DAO family. It depends on FAD as a cofactor.

It localises to the cytoplasm. The enzyme catalyses 5-aminomethyl-2-thiouridine(34) in tRNA + S-adenosyl-L-methionine = 5-methylaminomethyl-2-thiouridine(34) in tRNA + S-adenosyl-L-homocysteine + H(+). Functionally, catalyzes the last two steps in the biosynthesis of 5-methylaminomethyl-2-thiouridine (mnm(5)s(2)U) at the wobble position (U34) in tRNA. Catalyzes the FAD-dependent demodification of cmnm(5)s(2)U34 to nm(5)s(2)U34, followed by the transfer of a methyl group from S-adenosyl-L-methionine to nm(5)s(2)U34, to form mnm(5)s(2)U34. This chain is tRNA 5-methylaminomethyl-2-thiouridine biosynthesis bifunctional protein MnmC, found in Burkholderia orbicola (strain AU 1054).